Reading from the N-terminus, the 569-residue chain is Isocitrate dehydrogenase kinase/phosphatase (569 aa).

ATP-binding positions include 316-322 (APGVRGM) and Lys337. Residue Asp372 is part of the active site.

The protein belongs to the AceK family.

Its subcellular location is the cytoplasm. The enzyme catalyses L-seryl-[isocitrate dehydrogenase] + ATP = O-phospho-L-seryl-[isocitrate dehydrogenase] + ADP + H(+). Bifunctional enzyme which can phosphorylate or dephosphorylate isocitrate dehydrogenase (IDH) on a specific serine residue. This is a regulatory mechanism which enables bacteria to bypass the Krebs cycle via the glyoxylate shunt in response to the source of carbon. When bacteria are grown on glucose, IDH is fully active and unphosphorylated, but when grown on acetate or ethanol, the activity of IDH declines drastically concomitant with its phosphorylation. This Pseudomonas putida (strain W619) protein is Isocitrate dehydrogenase kinase/phosphatase.